A 127-amino-acid polypeptide reads, in one-letter code: Glycine cleavage system H protein (127 aa).

The region spanning 22–104 (QVVIGITHFA…YEGAWMVKVE (83 aa)) is the Lipoyl-binding domain. At Lys63 the chain carries N6-lipoyllysine.

This sequence belongs to the GcvH family. As to quaternary structure, the glycine cleavage system is composed of four proteins: P, T, L and H. Requires (R)-lipoate as cofactor.

In terms of biological role, the glycine cleavage system catalyzes the degradation of glycine. The H protein shuttles the methylamine group of glycine from the P protein to the T protein. Is also involved in protein lipoylation via its role as an octanoyl/lipoyl carrier protein intermediate. This chain is Glycine cleavage system H protein, found in Bacillus cytotoxicus (strain DSM 22905 / CIP 110041 / 391-98 / NVH 391-98).